The sequence spans 513 residues: E3 ubiquitin-protein ligase RNF25 (513 aa).

An RWD domain is found at 9–117 (SEIEVLQSIY…ERAKEILTDS (109 aa)). Residues Cys124, Cys127, Cys142, His144, His147, Cys150, Cys187, and Cys190 each coordinate Zn(2+). Residues 124–191 (CVICLYDFKE…ELAVVCPVCR (68 aa)) form an RING-type; atypical zinc finger. Residues 261–513 (NLSDTPGMTD…EKEFRKEGVL (253 aa)) form a disordered region. Over residues 271 to 297 (SSGAESSQSLPSSSPDSTSTTQTSQNQ) the composition is skewed to low complexity. Composition is skewed to polar residues over residues 345-397 (SDKI…QDML) and 406-423 (EVSQQKECISKEVTQTIL). The span at 426 to 440 (GHPEREHVGRGDKRG) shows a compositional bias: basic and acidic residues. The span at 482 to 498 (AGRGHRGGGAYRGGGRG) shows a compositional bias: gly residues. Basic and acidic residues predominate over residues 501–513 (QRVEKEFRKEGVL).

Belongs to the RNF25 family.

The protein localises to the cytoplasm. It catalyses the reaction S-ubiquitinyl-[E2 ubiquitin-conjugating enzyme]-L-cysteine + [acceptor protein]-L-lysine = [E2 ubiquitin-conjugating enzyme]-L-cysteine + N(6)-ubiquitinyl-[acceptor protein]-L-lysine.. Its pathway is protein modification; protein ubiquitination. E3 ubiquitin-protein ligase that plays a key role in the RNF14-RNF25 translation quality control pathway, a pathway that takes place when a ribosome has stalled during translation, and which promotes ubiquitination and degradation of translation factors on stalled ribosomes. May also acts as a positive regulator of the Wnt signaling. The chain is E3 ubiquitin-protein ligase RNF25 from Danio rerio (Zebrafish).